Consider the following 89-residue polypeptide: U1-hexatoxin-Iw1e (89 aa).

The signal sequence occupies residues 1–18; sequence MLKFVVLIFVVIMASTFA. Cystine bridges form between C21/C32, C26/C40, C31/C66, C50/C74, and C68/C81. The propeptide occupies 87–89; sequence RSE.

Belongs to the MIT-like AcTx family. As to expression, expressed by the venom gland.

It is found in the secreted. The protein is U1-hexatoxin-Iw1e of Illawarra wisharti (Illawarra funnel-web spider).